The following is a 98-amino-acid chain: NADH-ubiquinone oxidoreductase chain 4L (98 aa).

The next 3 membrane-spanning stretches (helical) occupy residues 1 to 21 (MSLT…GLLM), 29 to 49 (SLLC…VTIL), and 61 to 81 (IILL…LVMV).

It belongs to the complex I subunit 4L family. As to quaternary structure, core subunit of respiratory chain NADH dehydrogenase (Complex I) which is composed of 45 different subunits.

It is found in the mitochondrion inner membrane. It catalyses the reaction a ubiquinone + NADH + 5 H(+)(in) = a ubiquinol + NAD(+) + 4 H(+)(out). Functionally, core subunit of the mitochondrial membrane respiratory chain NADH dehydrogenase (Complex I) which catalyzes electron transfer from NADH through the respiratory chain, using ubiquinone as an electron acceptor. Part of the enzyme membrane arm which is embedded in the lipid bilayer and involved in proton translocation. The polypeptide is NADH-ubiquinone oxidoreductase chain 4L (MT-ND4L) (Sturnira lilium (Lesser yellow-shouldered bat)).